The chain runs to 380 residues: L-lactate dehydrogenase (380 aa).

One can recognise an FMN hydroxy acid dehydrogenase domain in the interval 1-380 (MIISSASDYR…DASILVKAVA (380 aa)). Tyr-24 is a substrate binding site. The FMN site is built by Ser-106 and Gln-127. Substrate is bound at residue Tyr-129. Thr-155 provides a ligand contact to FMN. Residue Arg-164 participates in substrate binding. Lys-251 lines the FMN pocket. His-275 acts as the Proton acceptor in catalysis. Substrate is bound at residue Arg-278. Residue 306–330 (DSGIRSGLDVVRMLALGAKGVLLGR) participates in FMN binding.

This sequence belongs to the FMN-dependent alpha-hydroxy acid dehydrogenase family. As to quaternary structure, homotetramer. It depends on FMN as a cofactor.

It is found in the cell inner membrane. The enzyme catalyses (S)-lactate + A = pyruvate + AH2. Catalyzes the conversion of L-lactate to pyruvate. Is coupled to the respiratory chain. In Pseudomonas syringae pv. syringae (strain B728a), this protein is L-lactate dehydrogenase.